The chain runs to 296 residues: Methylsterol monooxygenase 1 (296 aa).

Helical transmembrane passes span 55–75 and 100–120; these read LLVHEASYFLLCVPGFIFQFI and TLIFNHFFIQLPLICGTYYFT. The 130-residue stretch at 145–274 folds into the Fatty acid hydroxylase domain; that stretch reads CAVIEDAWHY…FTWWDRIFGT (130 aa). A Histidine box-1 motif is present at residues 157–161; the sequence is HRLLH. The Histidine box-2 signature appears at 170–174; it reads HKVHH. A helical transmembrane segment spans residues 199–219; it reads FFIGIVVFCNHVVLLWAWVIC. The short motif at 249 to 255 is the Histidine box-3 element; that stretch reads FHDFHHM.

It belongs to the sterol desaturase family. Requires Fe cation as cofactor.

Its subcellular location is the endoplasmic reticulum membrane. The enzyme catalyses 4,4-dimethyl-5alpha-cholest-7-en-3beta-ol + 6 Fe(II)-[cytochrome b5] + 3 O2 + 5 H(+) = 4alpha-carboxy-4beta-methyl-5alpha-cholest-7-ene-3beta-ol + 6 Fe(III)-[cytochrome b5] + 4 H2O. Its pathway is steroid biosynthesis; zymosterol biosynthesis; zymosterol from lanosterol: step 3/6. Its function is as follows. Catalyzes the first step in the removal of the two C-4 methyl groups of 4,4-dimethylzymosterol. In Gallus gallus (Chicken), this protein is Methylsterol monooxygenase 1 (MSMO1).